Consider the following 199-residue polypeptide: Chromophore lyase CpcT/CpeT 2 (199 aa).

Belongs to the CpcT/CpeT biliprotein lyase family.

Its function is as follows. Covalently attaches a chromophore to Cys residue(s) of phycobiliproteins. This chain is Chromophore lyase CpcT/CpeT 2, found in Synechococcus sp. (strain JA-3-3Ab) (Cyanobacteria bacterium Yellowstone A-Prime).